Consider the following 251-residue polypeptide: MSGHSKWATTKHKKAVVDARRGKMFARLIKNIEVAARVGGGDPAGNPTLYDAIQKAKKSSVPNENIERARKRGAGEEAGGADWQTIMYEGYAPNGVAVLIECLTDNRNRAASEVRVAMTRNGGTMADPGSVSYLFSRKGVVTLEKNGLTEDDVLAAVLEAGAEDVNDLGDSFEVISEPAELVAVRSALQDAGIDYESAEASFQPSVSVPVDLDGARKVFKLVDALEDSDDVQNVWTNVDVSDEVLAALDDE.

Belongs to the TACO1 family.

The protein localises to the cytoplasm. This chain is Probable transcriptional regulatory protein MRA_2631, found in Mycobacterium tuberculosis (strain ATCC 25177 / H37Ra).